We begin with the raw amino-acid sequence, 216 residues long: Peptide methionine sulfoxide reductase MsrA (216 aa).

Cys-54 is a catalytic residue.

It belongs to the MsrA Met sulfoxide reductase family.

The enzyme catalyses L-methionyl-[protein] + [thioredoxin]-disulfide + H2O = L-methionyl-(S)-S-oxide-[protein] + [thioredoxin]-dithiol. It catalyses the reaction [thioredoxin]-disulfide + L-methionine + H2O = L-methionine (S)-S-oxide + [thioredoxin]-dithiol. In terms of biological role, has an important function as a repair enzyme for proteins that have been inactivated by oxidation. Catalyzes the reversible oxidation-reduction of methionine sulfoxide in proteins to methionine. The sequence is that of Peptide methionine sulfoxide reductase MsrA from Xanthomonas campestris pv. campestris (strain 8004).